A 229-amino-acid polypeptide reads, in one-letter code: RNA chaperone ProQ (229 aa).

The disordered stretch occupies residues 105–178; it reads EAKARVQAQR…PREEKHTPVS (74 aa). Residues 117–136 are compositionally biased toward basic and acidic residues; it reads QQAKKREAAAAAGDKESAPR. Residues 137–146 show a composition bias toward basic residues; the sequence is RERKPRPAAP. Over residues 147-176 the composition is skewed to basic and acidic residues; it reads RRKEGAERKPRAEKPAAKAPRAPREEKHTP.

Belongs to the ProQ family.

It is found in the cytoplasm. Functionally, RNA chaperone with significant RNA binding, RNA strand exchange and RNA duplexing activities. May regulate ProP activity through an RNA-based, post-transcriptional mechanism. The sequence is that of RNA chaperone ProQ from Escherichia fergusonii (strain ATCC 35469 / DSM 13698 / CCUG 18766 / IAM 14443 / JCM 21226 / LMG 7866 / NBRC 102419 / NCTC 12128 / CDC 0568-73).